Reading from the N-terminus, the 1368-residue chain is Cingulin (1368 aa).

Residues 9 to 378 (MADQHIPVGQ…KQQRTVQSEF (370 aa)) are interaction with TJP3/ZO3 and myosin. Positions 9–435 (MADQHIPVGQ…EKLPSLQVQP (427 aa)) are head. Residues 41–55 (QDSYGVAVRVQGIDG) carry the ZIM motif. 5 disordered regions span residues 71 to 264 (FGVQ…TKPL), 278 to 312 (GQVR…DTAD), 1053 to 1080 (SRKE…NSSR), 1163 to 1183 (NRSR…RSRG), and 1308 to 1368 (QQEI…TSSC). The segment covering 83–97 (NASNTSPPNYQNYSS) has biased composition (polar residues). Residues 101-294 (GPSRSISSES…ARRSQALKDE (194 aa)) are interaction with F-actin. Composition is skewed to low complexity over residues 116-132 (PYGS…YSSA) and 200-211 (SQSSRDSAWSRS). The interaction with TJP2/ZO2 stretch occupies residues 150 to 295 (SSLPRPLQAS…RRSQALKDER (146 aa)). The span at 228–256 (SATSQQSTSVSNKTKKNGLSTSSPSNQSN) shows a compositional bias: polar residues. A compositionally biased stretch (basic and acidic residues) spans 290 to 312 (ALKDERKRSQSLDGRKNYHDTAD). Positions 377 to 1368 (EFQLKSTPDL…TESNLQTSSC (992 aa)) are interaction with myosin. The stretch at 436 to 1330 (GEDTISLGSQ…VMEKESKRKP (895 aa)) forms a coiled coil. Positions 1320-1338 (KVMEKESKRKPIRPAHDDD) are enriched in basic and acidic residues. The segment at 1331–1368 (IRPAHDDDLSSDGEFGGPYDPSSITSLLTESNLQTSSC) is tail. The segment covering 1352–1368 (SSITSLLTESNLQTSSC) has biased composition (polar residues).

The protein belongs to the cingulin family. In terms of assembly, parallel homodimer. Interacts with TJP1/ZO1 and TJP2/ZO2 in vivo, and TJP3/ZO3, myosin and OCLN in vitro, possibly directly. Acts as an F-actin bundling protein in vitro. In terms of tissue distribution, localized on the cytoplasmic face of tight junctions of polarized epithelia and some endothelia.

The protein localises to the cell junction. Its subcellular location is the tight junction. Its function is as follows. Probably plays a role in the formation and regulation of the tight junction (TJ) paracellular permeability barrier, possibly by linking ZO proteins to the actomyosin cytoskeleton. The protein is Cingulin of Xenopus laevis (African clawed frog).